The chain runs to 147 residues: SILISFPVQLNWHRDQAGSWGGLDLTNNLANWTPWEEDVWEPDVRAENCDSSLNRTYAISSSLVSFYIPVAIMIVTYTRIYRIAQVQIRRISSLERAAEHAQSCRSSAACAPDTSLRASIKKETKVLKTLSVIMGVFVCCWLPFFIL.

Residues 1-12 (SILISFPVQLNW) traverse the membrane as a helical segment. Over 13–55 (HRDQAGSWGGLDLTNNLANWTPWEEDVWEPDVRAENCDSSLNR) the chain is Extracellular. An N-linked (GlcNAc...) asparagine glycan is attached at asparagine 54. The helical transmembrane segment at 56-78 (TYAISSSLVSFYIPVAIMIVTYT) threads the bilayer. Residues 79 to 128 (RIYRIAQVQIRRISSLERAAEHAQSCRSSAACAPDTSLRASIKKETKVLK) lie on the Cytoplasmic side of the membrane. Residues 129–147 (TLSVIMGVFVCCWLPFFIL) form a helical membrane-spanning segment.

This sequence belongs to the G-protein coupled receptor 1 family.

It localises to the cell membrane. Its function is as follows. Dopamine receptor whose activity is mediated by G proteins which activate adenylyl cyclase. This is D(1B) dopamine receptor (DRD5) from Macaca mulatta (Rhesus macaque).